We begin with the raw amino-acid sequence, 155 residues long: uncharacterized protein (155 aa).

Transmembrane regions (helical) follow at residues 2 to 24, 62 to 84, 97 to 116, and 131 to 148; these read TFLFLILVFIIEILQLSVFPPIF, AVVNFLGFISLLNVVFTYLYLVL, VFLIMPLILLLRKLTIFLVV, and VVLLIDLIFLILLYKVFN.

The protein resides in the cell membrane. This is an uncharacterized protein from Aquifex aeolicus (strain VF5).